A 587-amino-acid chain; its full sequence is Phosphomethylpyrimidine synthase (587 aa).

A disordered region spans residues 1–58 (MTPTQNEIHPKHSYSPIRKDGLEVPETEIRLDDSPSGPNEPFRIYRTRGPETNPKQGL). Positions 17-33 (IRKDGLEVPETEIRLDD) are enriched in basic and acidic residues. Substrate contacts are provided by residues asparagine 180, methionine 209, tyrosine 238, histidine 274, 294–296 (SRG), 335–338 (DGLR), and glutamate 374. Residue histidine 378 coordinates Zn(2+). Tyrosine 401 is a substrate binding site. Histidine 442 is a binding site for Zn(2+). [4Fe-4S] cluster is bound by residues cysteine 522, cysteine 525, and cysteine 530.

It belongs to the ThiC family. [4Fe-4S] cluster is required as a cofactor.

The catalysed reaction is 5-amino-1-(5-phospho-beta-D-ribosyl)imidazole + S-adenosyl-L-methionine = 4-amino-2-methyl-5-(phosphooxymethyl)pyrimidine + CO + 5'-deoxyadenosine + formate + L-methionine + 3 H(+). It functions in the pathway cofactor biosynthesis; thiamine diphosphate biosynthesis. Its function is as follows. Catalyzes the synthesis of the hydroxymethylpyrimidine phosphate (HMP-P) moiety of thiamine from aminoimidazole ribotide (AIR) in a radical S-adenosyl-L-methionine (SAM)-dependent reaction. In Corynebacterium glutamicum (strain ATCC 13032 / DSM 20300 / JCM 1318 / BCRC 11384 / CCUG 27702 / LMG 3730 / NBRC 12168 / NCIMB 10025 / NRRL B-2784 / 534), this protein is Phosphomethylpyrimidine synthase.